The primary structure comprises 66 residues: Large ribosomal subunit protein bL33c (66 aa).

Belongs to the bacterial ribosomal protein bL33 family.

The protein resides in the plastid. It localises to the chloroplast. This Oryza nivara (Indian wild rice) protein is Large ribosomal subunit protein bL33c.